Reading from the N-terminus, the 653-residue chain is Laccase ustL (653 aa).

Residues 1 to 20 (MTSLTGLALLLCVLASQSWA) form the signal peptide. 2 consecutive Plastocyanin-like domains span residues 31–143 (WEKG…RPKR) and 173–362 (VLSD…ATQV). N-linked (GlcNAc...) asparagine glycans are attached at residues Asn-74, Asn-220, Asn-235, Asn-255, Asn-277, Asn-405, Asn-463, and Asn-479. One can recognise a Plastocyanin-like 3 domain in the interval 463–594 (NQTVGTEDEK…GGMSIALLDG (132 aa)). Residues His-501, His-504, His-506, His-576, Cys-577, His-578, and His-582 each contribute to the Cu cation site. The N-linked (GlcNAc...) asparagine glycan is linked to Asn-623.

Belongs to the multicopper oxidase family.

The catalysed reaction is 4 norrubrofusarin + O2 = 2 ustilaginoidin A + 2 H2O. It functions in the pathway secondary metabolite biosynthesis. Laccase; part of the gene cluster that mediates the biosynthesis of ustilaginoidins, dimeric gamma-naphthopyrones isolated from different fungal species. The first step in the biosynthesis of ustilaginoidins is the production of gamma-naphthopyrone precursor YWA1 by the non-reducing polyketide synthase ustP, via condensation of one acetyl-CoA starter unit with 6 malonyl-CoA units. YWA1 is then probably substrate of the ustZ to yield norrubrofusarin via a dehydration reaction. A key enzyme in the biosynthetic pathway is the laccase ustL, which catalyzes the oxidative dimerization of norrubrofusarin to ustilaginoidin A. It can produce the M- and P-atropisomers in varying amounts, depending on the reaction conditions. For the biosynthesis of 3-methylustilaginoid in derivatives such as chaetochromin A, a methylated derivative of YWA1 is required. The C-methylation is considered to be catalyzed by ustM, the phosphopantetheine attachment site of which indicates that it acts on the growing polyketide chain before release of the product. For the biosynthesis of chaetochromin A, it is assumed that saturation of the D2 double bond takes place before dimerization, and is probably catalyzed by an external reductase because no candidate gene was identified within the cluster. The polypeptide is Laccase ustL (Ustilaginoidea virens (Rice false smut fungus)).